Here is a 660-residue protein sequence, read N- to C-terminus: Probable serine/threonine-protein kinase CE0033 (660 aa).

The 270-residue stretch at 9–278 folds into the Protein kinase domain; the sequence is YELGASIGSG…AEMAADLELL (270 aa). ATP-binding positions include 15 to 23 and lysine 38; that span reads IGSGGMSEV. The Proton acceptor role is filled by aspartate 136. Residues 288–319 are disordered; it reads RAHVEKPDEPETVVVPQRLSTPPPPPTPAMPA. 3 consecutive PASTA domains span residues 377–443, 444–512, and 513–577; these read SAST…TISS, GREV…TVST, and GPSL…EISN.

Belongs to the protein kinase superfamily. Ser/Thr protein kinase family.

The enzyme catalyses L-seryl-[protein] + ATP = O-phospho-L-seryl-[protein] + ADP + H(+). It catalyses the reaction L-threonyl-[protein] + ATP = O-phospho-L-threonyl-[protein] + ADP + H(+). The sequence is that of Probable serine/threonine-protein kinase CE0033 from Corynebacterium efficiens (strain DSM 44549 / YS-314 / AJ 12310 / JCM 11189 / NBRC 100395).